We begin with the raw amino-acid sequence, 443 residues long: Endoplasmic reticulum protein SC65 (443 aa).

The N-terminal stretch at 1 to 18 (MARAAWGLLWLLLGSAGA) is a signal peptide. Residues 81–102 (SGPATSQPRPAPGPDGDNEGDG) are disordered. An N-linked (GlcNAc...) asparagine glycan is attached at Asn367. 3 stretches are compositionally biased toward acidic residues: residues 387 to 398 (DEMELEETESLP), 407 to 419 (AEFEGEGDYEEGL), and 431 to 443 (GDEDEAEPEPELA). The tract at residues 387 to 443 (DEMELEETESLPEPEKPLSDAEFEGEGDYEEGLYADWWQEPDAKGDEDEAEPEPELA) is disordered.

It belongs to the leprecan family. Interacts with PLOD1, P3H3 and PPIB. Identified in a complex with PLOD1 and P3H3. As to expression, found in testis, brain, heart and at a much lower level in liver.

It is found in the endoplasmic reticulum. Functionally, part of a complex composed of PLOD1, P3H3 and P3H4 that catalyzes hydroxylation of lysine residues in collagen alpha chains and is required for normal assembly and cross-linking of collagen fibrils. Required for normal bone density and normal skin stability via its role in hydroxylation of lysine residues in collagen alpha chains and in collagen fibril assembly. This is Endoplasmic reticulum protein SC65 from Rattus norvegicus (Rat).